A 157-amino-acid chain; its full sequence is SsrA-binding protein (157 aa).

It belongs to the SmpB family.

The protein localises to the cytoplasm. Required for rescue of stalled ribosomes mediated by trans-translation. Binds to transfer-messenger RNA (tmRNA), required for stable association of tmRNA with ribosomes. tmRNA and SmpB together mimic tRNA shape, replacing the anticodon stem-loop with SmpB. tmRNA is encoded by the ssrA gene; the 2 termini fold to resemble tRNA(Ala) and it encodes a 'tag peptide', a short internal open reading frame. During trans-translation Ala-aminoacylated tmRNA acts like a tRNA, entering the A-site of stalled ribosomes, displacing the stalled mRNA. The ribosome then switches to translate the ORF on the tmRNA; the nascent peptide is terminated with the 'tag peptide' encoded by the tmRNA and targeted for degradation. The ribosome is freed to recommence translation, which seems to be the essential function of trans-translation. The protein is SsrA-binding protein of Syntrophomonas wolfei subsp. wolfei (strain DSM 2245B / Goettingen).